The primary structure comprises 209 residues: Uracil phosphoribosyltransferase (209 aa).

5-phospho-alpha-D-ribose 1-diphosphate is bound by residues arginine 78, arginine 103, and 130-138 (DPMFATGGT). Uracil-binding positions include isoleucine 193 and 198–200 (GDA). 5-phospho-alpha-D-ribose 1-diphosphate is bound at residue aspartate 199.

It belongs to the UPRTase family. Mg(2+) serves as cofactor.

It catalyses the reaction UMP + diphosphate = 5-phospho-alpha-D-ribose 1-diphosphate + uracil. The protein operates within pyrimidine metabolism; UMP biosynthesis via salvage pathway; UMP from uracil: step 1/1. Its activity is regulated as follows. Allosterically activated by GTP. Functionally, catalyzes the conversion of uracil and 5-phospho-alpha-D-ribose 1-diphosphate (PRPP) to UMP and diphosphate. The sequence is that of Uracil phosphoribosyltransferase from Campylobacter fetus subsp. fetus (strain 82-40).